The sequence spans 179 residues: MLDSFDKGWFVLQTYSGYENKVKENLLQRAQTYNMLDNILRVEIPTQTVNVEKNGQTKEIEENRFPGYVLVEMVMTDEAWFVVRNTPNVTGFVGSHGNRSKPTPLLEEEIRAILLSMGQTIDVFDTNIKEGDVVQIIDGAFMGQEGRVVEIENNKVKLMLNMFGSETVAEVELYQIAEL.

Residues 130-157 (EGDVVQIIDGAFMGQEGRVVEIENNKVK) form the KOW domain.

Belongs to the NusG family.

Functionally, participates in transcription elongation, termination and antitermination. In Streptococcus pyogenes serotype M1, this protein is Transcription termination/antitermination protein NusG.